The following is a 138-amino-acid chain: Small ribosomal subunit protein uS11c (138 aa).

A disordered region spans residues 1-23 (MKKPIPRIGSRRNGRIGSRKNGR).

It belongs to the universal ribosomal protein uS11 family. Part of the 30S ribosomal subunit.

It localises to the plastid. The protein resides in the chloroplast. The chain is Small ribosomal subunit protein uS11c from Amborella trichopoda.